The chain runs to 130 residues: Small ribosomal subunit protein uS9 (130 aa).

The protein belongs to the universal ribosomal protein uS9 family.

The chain is Small ribosomal subunit protein uS9 from Tolumonas auensis (strain DSM 9187 / NBRC 110442 / TA 4).